The primary structure comprises 114 residues: Flagellar hook-basal body complex protein FliE (114 aa).

The protein belongs to the FliE family.

It localises to the bacterial flagellum basal body. This chain is Flagellar hook-basal body complex protein FliE, found in Desulfitobacterium hafniense (strain DSM 10664 / DCB-2).